The following is a 79-amino-acid chain: uncharacterized protein (79 aa).

This is an uncharacterized protein from Listeria innocua serovar 6a (strain ATCC BAA-680 / CLIP 11262).